Here is a 96-residue protein sequence, read N- to C-terminus: Glutamyl-tRNA(Gln) amidotransferase subunit C (96 aa).

Belongs to the GatC family. Heterotrimer of A, B and C subunits.

It catalyses the reaction L-glutamyl-tRNA(Gln) + L-glutamine + ATP + H2O = L-glutaminyl-tRNA(Gln) + L-glutamate + ADP + phosphate + H(+). The enzyme catalyses L-aspartyl-tRNA(Asn) + L-glutamine + ATP + H2O = L-asparaginyl-tRNA(Asn) + L-glutamate + ADP + phosphate + 2 H(+). Allows the formation of correctly charged Asn-tRNA(Asn) or Gln-tRNA(Gln) through the transamidation of misacylated Asp-tRNA(Asn) or Glu-tRNA(Gln) in organisms which lack either or both of asparaginyl-tRNA or glutaminyl-tRNA synthetases. The reaction takes place in the presence of glutamine and ATP through an activated phospho-Asp-tRNA(Asn) or phospho-Glu-tRNA(Gln). The chain is Glutamyl-tRNA(Gln) amidotransferase subunit C from Nostoc sp. (strain PCC 7120 / SAG 25.82 / UTEX 2576).